Consider the following 208-residue polypeptide: Outer-membrane lipoprotein LolB (208 aa).

The N-terminal stretch at 1-23 (MKPIQKLSLFRLLPLSCVLLLTA) is a signal peptide. A lipid anchor (N-palmitoyl cysteine) is attached at cysteine 24. Cysteine 24 carries S-diacylglycerol cysteine lipidation.

It belongs to the LolB family. Monomer.

The protein localises to the cell outer membrane. Plays a critical role in the incorporation of lipoproteins in the outer membrane after they are released by the LolA protein. The protein is Outer-membrane lipoprotein LolB of Photorhabdus laumondii subsp. laumondii (strain DSM 15139 / CIP 105565 / TT01) (Photorhabdus luminescens subsp. laumondii).